The primary structure comprises 448 residues: Tubulin beta chain (448 aa).

Residues Gln11, Glu69, Ser138, Gly142, Thr143, Gly144, Asn204, and Asn226 each coordinate GTP. Mg(2+) is bound at residue Glu69. The tract at residues 425–448 (YQDAGVDEEEEEYDEEAPVEEPLE) is disordered. Residues 429-448 (GVDEEEEEYDEEAPVEEPLE) show a composition bias toward acidic residues.

This sequence belongs to the tubulin family. Dimer of alpha and beta chains. A typical microtubule is a hollow water-filled tube with an outer diameter of 25 nm and an inner diameter of 15 nM. Alpha-beta heterodimers associate head-to-tail to form protofilaments running lengthwise along the microtubule wall with the beta-tubulin subunit facing the microtubule plus end conferring a structural polarity. Microtubules usually have 13 protofilaments but different protofilament numbers can be found in some organisms and specialized cells. Requires Mg(2+) as cofactor.

The protein resides in the cytoplasm. It is found in the cytoskeleton. In terms of biological role, tubulin is the major constituent of microtubules, a cylinder consisting of laterally associated linear protofilaments composed of alpha- and beta-tubulin heterodimers. Microtubules grow by the addition of GTP-tubulin dimers to the microtubule end, where a stabilizing cap forms. Below the cap, tubulin dimers are in GDP-bound state, owing to GTPase activity of alpha-tubulin. The polypeptide is Tubulin beta chain (Metarhizium anisopliae (Entomophthora anisopliae)).